Consider the following 502-residue polypeptide: Transmembrane prolyl 4-hydroxylase (502 aa).

The segment at 1 to 29 (MAAAAVTGQRPETAAAEEASRPQWAPPDH) is disordered. Over 1-60 (MAAAAVTGQRPETAAAEEASRPQWAPPDHCQAQAAAGLGDGEDAPVRPLCKPRGICSRAY) the chain is Cytoplasmic. Residues 61-81 (FLVLMVFVHLYLGNVLALLLF) traverse the membrane as a helical; Signal-anchor for type II membrane protein segment. Topologically, residues 82-502 (VHYSNGDESS…RAYRDARVEL (421 aa)) are lumenal. The interval 89–111 (ESSDPGPQHRAQGPGPEPTLGPL) is disordered. 2 EF-hand domains span residues 185 to 220 (TMQVSQLDLFRLLDQNRDGHLQLREVLAQTRLGNGW) and 224 to 259 (PESIQEMYAAIKADPDGDGVLSLQEFSNMDLRDFHK). Ca(2+) contacts are provided by Asp198, Asn200, Asp202, His204, Glu209, Asp237, Asp239, Asp241, and Glu248. Residues 310–460 (LSEPLQVVRY…KWIANNWINV (151 aa)) form the Fe2OG dioxygenase domain. Residues His328 and Asp330 each coordinate Fe cation. Residues Asn348 and Asn368 are each glycosylated (N-linked (GlcNAc...) asparagine). Residue Glu374 participates in Fe cation binding. The N-linked (GlcNAc...) asparagine glycan is linked to Asn382. A 2-oxoglutarate-binding site is contributed by Lys451.

As to quaternary structure, homodimer. Fe(2+) is required as a cofactor. Requires L-ascorbate as cofactor. Glycosylated. Widely expressed with highest levels in adult pancreas, heart, skeletal muscle, brain, placenta, kidney and adrenal gland. Expressed at lower levels in epiphyseal cartilage and in fibroblasts.

The protein resides in the endoplasmic reticulum membrane. The enzyme catalyses L-prolyl-[hypoxia-inducible factor alpha subunit] + 2-oxoglutarate + O2 = trans-4-hydroxy-L-prolyl-[hypoxia-inducible factor alpha subunit] + succinate + CO2. Its function is as follows. Catalyzes the post-translational formation of 4-hydroxyproline in hypoxia-inducible factor (HIF) alpha proteins. Hydroxylates HIF1A at 'Pro-402' and 'Pro-564'. May function as a cellular oxygen sensor and, under normoxic conditions, may target HIF through the hydroxylation for proteasomal degradation via the von Hippel-Lindau ubiquitination complex. The polypeptide is Transmembrane prolyl 4-hydroxylase (P4HTM) (Homo sapiens (Human)).